Consider the following 761-residue polypeptide: 1,2-alpha-glucosylglycerol phosphorylase (761 aa).

327–328 contributes to the glycerol binding site; it reads YQ. 333–334 contributes to the substrate binding site; the sequence is WD. The Proton donor role is filled by glutamate 475. 587–588 provides a ligand contact to substrate; it reads KQ.

Belongs to the glycosyl hydrolase 65 family. In terms of assembly, homodimer.

The catalysed reaction is 2-O-(alpha-D-glucopyranosyl)glycerol + phosphate = beta-D-glucose 1-phosphate + glycerol. In terms of biological role, catalyzes both the (1) reversible phosphorolysis of 2-O-alpha-D-glucopyranosyl-sn-glycerol (GG) from beta-D-glucose 1-phosphate (betaGlc1P) and glycerol and (2) the hydrolysis of betaGlc1P. the betaGlc1P hydrolysis is a glucosyl-transfer reaction to an acceptor water molecule that produces an anomer-inverted alpha-glucose, not a phosphatase-type reaction. In the absence of glycerol produces alpha-D-glucopyranose and phosphate from beta-D-glucopyranose 1-phosphate. The protein is 1,2-alpha-glucosylglycerol phosphorylase of Bacillus selenitireducens (strain ATCC 700615 / DSM 15326 / MLS10).